We begin with the raw amino-acid sequence, 92 residues long: uncharacterized protein (92 aa).

Residues 25 to 53 form a disordered region; that stretch reads AGRGVRREARDTPCRGTAEGLATSQPEDG.

This is an uncharacterized protein from Treponema pallidum (strain Nichols).